The sequence spans 254 residues: 3-dehydroquinate dehydratase (254 aa).

3-dehydroquinate contacts are provided by residues 47–49 and arginine 83; that span reads EFR. The Proton donor/acceptor role is filled by histidine 144. Catalysis depends on lysine 171, which acts as the Schiff-base intermediate with substrate. 3-dehydroquinate-binding residues include arginine 213, serine 232, and glutamine 236.

The protein belongs to the type-I 3-dehydroquinase family. Homodimer.

It catalyses the reaction 3-dehydroquinate = 3-dehydroshikimate + H2O. It participates in metabolic intermediate biosynthesis; chorismate biosynthesis; chorismate from D-erythrose 4-phosphate and phosphoenolpyruvate: step 3/7. In terms of biological role, involved in the third step of the chorismate pathway, which leads to the biosynthesis of aromatic amino acids. Catalyzes the cis-dehydration of 3-dehydroquinate (DHQ) and introduces the first double bond of the aromatic ring to yield 3-dehydroshikimate. The protein is 3-dehydroquinate dehydratase of Neisseria meningitidis serogroup A / serotype 4A (strain DSM 15465 / Z2491).